Here is a 138-residue protein sequence, read N- to C-terminus: ATP synthase epsilon chain (138 aa).

Belongs to the ATPase epsilon chain family. In terms of assembly, F-type ATPases have 2 components, CF(1) - the catalytic core - and CF(0) - the membrane proton channel. CF(1) has five subunits: alpha(3), beta(3), gamma(1), delta(1), epsilon(1). CF(0) has three main subunits: a, b and c.

It is found in the cellular thylakoid membrane. Its function is as follows. Produces ATP from ADP in the presence of a proton gradient across the membrane. This Synechococcus sp. (strain PCC 6716) protein is ATP synthase epsilon chain (atpC).